A 256-amino-acid chain; its full sequence is Cytokine-inducible SH2-containing protein (256 aa).

Residues 81 to 162 enclose the SH2 domain; that stretch reads WYWGSITASE…PDVVSLVQHY (82 aa). The disordered stretch occupies residues 168–190; the sequence is ADTRSDSPDPAPTPALPVSKPDA. The region spanning 207–255 is the SOCS box domain; sequence KLVQPFVRRSSARSLQHLCRLVINRLVTDVDCLPLPRRMADYLRQYPFQ.

In terms of assembly, stably associated with the tyrosine-phosphorylated IL3 receptor beta chain and tyrosine-phosphorylated EPO receptor (EPOR).

Its pathway is protein modification; protein ubiquitination. Its function is as follows. SOCS family proteins form part of a classical negative feedback system that regulates cytokine signal transduction. CIS is involved in the negative regulation of cytokines that signal through the JAK-STAT5 pathway such as erythropoietin, prolactin and interleukin 3 (IL3) receptor. Inhibits STAT5 trans-activation by suppressing its tyrosine phosphorylation. May be a substrate recognition component of a SCF-like ECS (Elongin BC-CUL2/5-SOCS-box protein) E3 ubiquitin-protein ligase complex which mediates the ubiquitination and subsequent proteasomal degradation of target proteins. The polypeptide is Cytokine-inducible SH2-containing protein (Cish) (Rattus norvegicus (Rat)).